Here is a 696-residue protein sequence, read N- to C-terminus: Gametogenetin-binding protein 2 (696 aa).

Ser360 bears the Phosphoserine mark.

Interacts with GGN.

Its subcellular location is the cytoplasmic vesicle. Functionally, may be involved in spermatogenesis. This chain is Gametogenetin-binding protein 2 (Ggnbp2), found in Rattus norvegicus (Rat).